Here is a 238-residue protein sequence, read N- to C-terminus: tRNA1(Val) (adenine(37)-N6)-methyltransferase (238 aa).

This sequence belongs to the methyltransferase superfamily. tRNA (adenine-N(6)-)-methyltransferase family.

It is found in the cytoplasm. The catalysed reaction is adenosine(37) in tRNA1(Val) + S-adenosyl-L-methionine = N(6)-methyladenosine(37) in tRNA1(Val) + S-adenosyl-L-homocysteine + H(+). Its function is as follows. Specifically methylates the adenine in position 37 of tRNA(1)(Val) (anticodon cmo5UAC). The sequence is that of tRNA1(Val) (adenine(37)-N6)-methyltransferase from Cytophaga hutchinsonii (strain ATCC 33406 / DSM 1761 / CIP 103989 / NBRC 15051 / NCIMB 9469 / D465).